Here is a 493-residue protein sequence, read N- to C-terminus: UDP-N-acetylmuramoyl-L-alanyl-D-glutamate--2,6-diaminopimelate ligase (493 aa).

UDP-N-acetyl-alpha-D-muramoyl-L-alanyl-D-glutamate is bound by residues Leu-30 and Ser-32. 117 to 123 (GTNGKTT) is an ATP binding site. Residues Asn-158, 159–160 (TT), Ser-186, Gln-192, and Arg-194 contribute to the UDP-N-acetyl-alpha-D-muramoyl-L-alanyl-D-glutamate site. Lys-226 is subject to N6-carboxylysine. Residues Arg-388, 412–415 (DNPR), Gly-463, and Glu-467 each bind meso-2,6-diaminopimelate. The short motif at 412-415 (DNPR) is the Meso-diaminopimelate recognition motif element.

Belongs to the MurCDEF family. MurE subfamily. Requires Mg(2+) as cofactor. In terms of processing, carboxylation is probably crucial for Mg(2+) binding and, consequently, for the gamma-phosphate positioning of ATP.

Its subcellular location is the cytoplasm. The catalysed reaction is UDP-N-acetyl-alpha-D-muramoyl-L-alanyl-D-glutamate + meso-2,6-diaminopimelate + ATP = UDP-N-acetyl-alpha-D-muramoyl-L-alanyl-gamma-D-glutamyl-meso-2,6-diaminopimelate + ADP + phosphate + H(+). It participates in cell wall biogenesis; peptidoglycan biosynthesis. Its function is as follows. Catalyzes the addition of meso-diaminopimelic acid to the nucleotide precursor UDP-N-acetylmuramoyl-L-alanyl-D-glutamate (UMAG) in the biosynthesis of bacterial cell-wall peptidoglycan. The sequence is that of UDP-N-acetylmuramoyl-L-alanyl-D-glutamate--2,6-diaminopimelate ligase from Vibrio vulnificus (strain YJ016).